A 530-amino-acid polypeptide reads, in one-letter code: Bifunctional purine biosynthesis protein PurH (530 aa).

The MGS-like domain occupies 2–150; sequence TDHPRRVTRA…KNHDDVAVVV (149 aa).

Belongs to the PurH family.

It carries out the reaction (6R)-10-formyltetrahydrofolate + 5-amino-1-(5-phospho-beta-D-ribosyl)imidazole-4-carboxamide = 5-formamido-1-(5-phospho-D-ribosyl)imidazole-4-carboxamide + (6S)-5,6,7,8-tetrahydrofolate. It catalyses the reaction IMP + H2O = 5-formamido-1-(5-phospho-D-ribosyl)imidazole-4-carboxamide. Its pathway is purine metabolism; IMP biosynthesis via de novo pathway; 5-formamido-1-(5-phospho-D-ribosyl)imidazole-4-carboxamide from 5-amino-1-(5-phospho-D-ribosyl)imidazole-4-carboxamide (10-formyl THF route): step 1/1. It functions in the pathway purine metabolism; IMP biosynthesis via de novo pathway; IMP from 5-formamido-1-(5-phospho-D-ribosyl)imidazole-4-carboxamide: step 1/1. The sequence is that of Bifunctional purine biosynthesis protein PurH from Bradyrhizobium diazoefficiens (strain JCM 10833 / BCRC 13528 / IAM 13628 / NBRC 14792 / USDA 110).